The primary structure comprises 80 residues: Small ribosomal subunit protein bS18 (80 aa).

It belongs to the bacterial ribosomal protein bS18 family. As to quaternary structure, part of the 30S ribosomal subunit. Forms a tight heterodimer with protein bS6.

In terms of biological role, binds as a heterodimer with protein bS6 to the central domain of the 16S rRNA, where it helps stabilize the platform of the 30S subunit. The polypeptide is Small ribosomal subunit protein bS18 (Beijerinckia indica subsp. indica (strain ATCC 9039 / DSM 1715 / NCIMB 8712)).